The sequence spans 98 residues: Small ribosomal subunit protein bS20 (98 aa).

It belongs to the bacterial ribosomal protein bS20 family.

Functionally, binds directly to 16S ribosomal RNA. This is Small ribosomal subunit protein bS20 from Synechococcus elongatus (strain ATCC 33912 / PCC 7942 / FACHB-805) (Anacystis nidulans R2).